The sequence spans 342 residues: tRNA N6-adenosine threonylcarbamoyltransferase (342 aa).

Residues His115 and His119 each coordinate Fe cation. Residues 137–141, Asp170, Gly183, Asp187, and Asn276 contribute to the substrate site; that span reads IVSGG. Residue Asp304 coordinates Fe cation.

The protein belongs to the KAE1 / TsaD family. Fe(2+) is required as a cofactor.

Its subcellular location is the cytoplasm. The enzyme catalyses L-threonylcarbamoyladenylate + adenosine(37) in tRNA = N(6)-L-threonylcarbamoyladenosine(37) in tRNA + AMP + H(+). Its function is as follows. Required for the formation of a threonylcarbamoyl group on adenosine at position 37 (t(6)A37) in tRNAs that read codons beginning with adenine. Is involved in the transfer of the threonylcarbamoyl moiety of threonylcarbamoyl-AMP (TC-AMP) to the N6 group of A37, together with TsaE and TsaB. TsaD likely plays a direct catalytic role in this reaction. The polypeptide is tRNA N6-adenosine threonylcarbamoyltransferase (Staphylococcus haemolyticus (strain JCSC1435)).